The chain runs to 107 residues: L-rhamnose mutarotase (107 aa).

Position 21 (tyrosine 21) interacts with substrate. Catalysis depends on histidine 25, which acts as the Proton donor. Residues tyrosine 44 and 79 to 80 (WW) each bind substrate.

Belongs to the rhamnose mutarotase family. Homodimer.

It is found in the cytoplasm. It carries out the reaction alpha-L-rhamnose = beta-L-rhamnose. It functions in the pathway carbohydrate metabolism; L-rhamnose metabolism. Functionally, involved in the anomeric conversion of L-rhamnose. This is L-rhamnose mutarotase from Agrobacterium fabrum (strain C58 / ATCC 33970) (Agrobacterium tumefaciens (strain C58)).